We begin with the raw amino-acid sequence, 727 residues long: ATP-dependent zinc metalloprotease FtsH (727 aa).

Residues Met1 to Arg6 are Cytoplasmic-facing. A helical transmembrane segment spans residues Asn7–Gly27. At Asn28–Val110 the chain is on the extracellular side. The chain crosses the membrane as a helical span at residues Phe111–Phe131. Residues Leu132–Arg727 lie on the Cytoplasmic side of the membrane. Gly205 to Thr212 is a binding site for ATP. A Zn(2+)-binding site is contributed by His427. Glu428 is an active-site residue. 2 residues coordinate Zn(2+): His431 and Asp503. 2 stretches are compositionally biased toward basic and acidic residues: residues Leu645 to Arg684 and Asn691 to His706. The segment at Leu645–Arg727 is disordered. Low complexity predominate over residues Pro710 to Arg727.

It in the central section; belongs to the AAA ATPase family. In the C-terminal section; belongs to the peptidase M41 family. In terms of assembly, homohexamer. The cofactor is Zn(2+).

Its subcellular location is the cell membrane. Its function is as follows. Acts as a processive, ATP-dependent zinc metallopeptidase for both cytoplasmic and membrane proteins. Plays a role in the quality control of integral membrane proteins. The polypeptide is ATP-dependent zinc metalloprotease FtsH (Staphylococcus haemolyticus (strain JCSC1435)).